The primary structure comprises 95 residues: Putative septation protein SpoVG (95 aa).

Belongs to the SpoVG family.

Its function is as follows. Could be involved in septation. This chain is Putative septation protein SpoVG, found in Clostridium acetobutylicum (strain ATCC 824 / DSM 792 / JCM 1419 / IAM 19013 / LMG 5710 / NBRC 13948 / NRRL B-527 / VKM B-1787 / 2291 / W).